A 450-amino-acid polypeptide reads, in one-letter code: UDP-N-acetylmuramoylalanine--D-glutamate ligase (450 aa).

119 to 125 (GSNGKTT) provides a ligand contact to ATP.

The protein belongs to the MurCDEF family.

It localises to the cytoplasm. It catalyses the reaction UDP-N-acetyl-alpha-D-muramoyl-L-alanine + D-glutamate + ATP = UDP-N-acetyl-alpha-D-muramoyl-L-alanyl-D-glutamate + ADP + phosphate + H(+). Its pathway is cell wall biogenesis; peptidoglycan biosynthesis. In terms of biological role, cell wall formation. Catalyzes the addition of glutamate to the nucleotide precursor UDP-N-acetylmuramoyl-L-alanine (UMA). The protein is UDP-N-acetylmuramoylalanine--D-glutamate ligase of Bacillus cereus (strain AH187).